A 100-amino-acid polypeptide reads, in one-letter code: NADH-quinone oxidoreductase subunit K (100 aa).

3 consecutive transmembrane segments (helical) span residues 4–24, 28–48, and 60–80; these read LQHGLILAAVLFVLGFTCLVL, LLFMLIGLEIMINSAALAFVV, and IMYILAISLAAAEASIGLALL.

The protein belongs to the complex I subunit 4L family. NDH-1 is composed of 13 different subunits. Subunits NuoA, H, J, K, L, M, N constitute the membrane sector of the complex.

Its subcellular location is the cell inner membrane. The catalysed reaction is a quinone + NADH + 5 H(+)(in) = a quinol + NAD(+) + 4 H(+)(out). Functionally, NDH-1 shuttles electrons from NADH, via FMN and iron-sulfur (Fe-S) centers, to quinones in the respiratory chain. The immediate electron acceptor for the enzyme in this species is believed to be ubiquinone. Couples the redox reaction to proton translocation (for every two electrons transferred, four hydrogen ions are translocated across the cytoplasmic membrane), and thus conserves the redox energy in a proton gradient. This Proteus mirabilis (strain HI4320) protein is NADH-quinone oxidoreductase subunit K.